The sequence spans 115 residues: NADH-ubiquinone oxidoreductase chain 3 (115 aa).

Helical transmembrane passes span 3–23 (IMLTLLTNVTLASLLVLIAFW), 55–75 (FFLVAITFLLFDLEIALLLPL), and 86–106 (TMLTMALFLLILLAASLAYEW).

This sequence belongs to the complex I subunit 3 family. In terms of assembly, core subunit of respiratory chain NADH dehydrogenase (Complex I) which is composed of 45 different subunits. Interacts with TMEM186. Interacts with TMEM242.

It is found in the mitochondrion inner membrane. The catalysed reaction is a ubiquinone + NADH + 5 H(+)(in) = a ubiquinol + NAD(+) + 4 H(+)(out). Its function is as follows. Core subunit of the mitochondrial membrane respiratory chain NADH dehydrogenase (Complex I) which catalyzes electron transfer from NADH through the respiratory chain, using ubiquinone as an electron acceptor. Essential for the catalytic activity of complex I. This chain is NADH-ubiquinone oxidoreductase chain 3, found in Sus scrofa (Pig).